Here is a 335-residue protein sequence, read N- to C-terminus: NADP(+)-dependent glycerol-3-phosphate dehydrogenase (335 aa).

A sn-glycerol 3-phosphate-binding site is contributed by Gly-137. Ala-141 contributes to the NADPH binding site. Positions 192, 250, 259, and 260 each coordinate sn-glycerol 3-phosphate. Lys-192 (proton acceptor) is an active-site residue. Arg-259 contributes to the NADPH binding site. Positions 287 and 289 each coordinate NADPH.

Belongs to the NAD-dependent glycerol-3-phosphate dehydrogenase family. In terms of assembly, homodimer.

The protein resides in the cytoplasm. The catalysed reaction is sn-glycerol 3-phosphate + NADP(+) = dihydroxyacetone phosphate + NADPH + H(+). Functionally, catalyzes the reduction of the glycolytic intermediate dihydroxyacetone phosphate (DHAP) to sn-glycerol 3-phosphate (G3P). Shows a 15-fold preference for NADPH over NADH in the reduction process. Can also catalyze the reverse reaction in vitro. Shows no activity with dihydroxyacetone, glycerol, glycerol-2-phosphate, D-glyceraldehyde-3-phosphate, DL-glyceraldehyde, D-erythrose-4-phosphate, D-fructose-6-phosphate, beta-D-glucose-6-phosphate, or alpha-D-galactose-1-phosphate. The sequence is that of NADP(+)-dependent glycerol-3-phosphate dehydrogenase from Archaeoglobus fulgidus (strain ATCC 49558 / DSM 4304 / JCM 9628 / NBRC 100126 / VC-16).